A 175-amino-acid chain; its full sequence is MGRTLENKQQIVTEIKSLLNDSEMAVVLDYKGLTIKEMSDLRSRLQTTNGICKVTKNSLMRKAIDGDSNWNDLESLLTGTNAFVLIKEDVGGAVKAIQSFQKDTKKSETKGALFEGRLLSDSEIKEIASLPSKEVLMAKIAGALNGVATKIAISINEVPSGLARSLKQHSEKSES.

The protein belongs to the universal ribosomal protein uL10 family. Part of the ribosomal stalk of the 50S ribosomal subunit. The N-terminus interacts with L11 and the large rRNA to form the base of the stalk. The C-terminus forms an elongated spine to which L12 dimers bind in a sequential fashion forming a multimeric L10(L12)X complex.

Forms part of the ribosomal stalk, playing a central role in the interaction of the ribosome with GTP-bound translation factors. This is Large ribosomal subunit protein uL10 from Prochlorococcus marinus (strain MIT 9301).